We begin with the raw amino-acid sequence, 957 residues long: Glycine dehydrogenase (decarboxylating) (957 aa).

At Lys-708 the chain carries N6-(pyridoxal phosphate)lysine.

It belongs to the GcvP family. The glycine cleavage system is composed of four proteins: P, T, L and H. The cofactor is pyridoxal 5'-phosphate.

The enzyme catalyses N(6)-[(R)-lipoyl]-L-lysyl-[glycine-cleavage complex H protein] + glycine + H(+) = N(6)-[(R)-S(8)-aminomethyldihydrolipoyl]-L-lysyl-[glycine-cleavage complex H protein] + CO2. In terms of biological role, the glycine cleavage system catalyzes the degradation of glycine. The P protein binds the alpha-amino group of glycine through its pyridoxal phosphate cofactor; CO(2) is released and the remaining methylamine moiety is then transferred to the lipoamide cofactor of the H protein. The sequence is that of Glycine dehydrogenase (decarboxylating) from Escherichia fergusonii (strain ATCC 35469 / DSM 13698 / CCUG 18766 / IAM 14443 / JCM 21226 / LMG 7866 / NBRC 102419 / NCTC 12128 / CDC 0568-73).